Consider the following 648-residue polypeptide: Pumilio homolog 3 (648 aa).

Residues 1-124 are disordered; that stretch reads MEVKGKKQFT…KKKKELKQSR (124 aa). The segment covering 17 to 27 has biased composition (basic and acidic residues); that stretch reads AQEKNRFHKNS. K33 bears the N6-acetyllysine mark. The span at 60 to 69 shows a compositional bias: basic residues; the sequence is LGKKGVKQFK. Basic and acidic residues predominate over residues 94–124; that stretch reads FQPDGRSDESAAKKPKWDDFKKKKKELKQSR. Residues 106–118 carry the Nuclear localization signal motif; it reads KKPKWDDFKKKKK. The region spanning 143-510 is the PUM-HD domain; sequence EILRRKDCDK…VVLDKSACVL (368 aa). 11 Pumilio repeats span residues 177–212, 213–248, 249–277, 289–325, 326–361, 362–397, 398–435, 436–504, 505–551, 552–596, and 597–636; these read HDST…LSKA, KYSR…MLRH, AEAS…ELYG, RTLD…VIKH, SLVH…LAHT, HDGA…VANG, QYSH…IVND, KYGR…VVLD, KSAC…IAEH, PAGH…WASV, and NRGA…KSTS. Positions 289-297 are HA-8; it reads RTLDKVLEV.

As to quaternary structure, interacts with PARP1 (via catalytic domain). As to expression, widely expressed.

The protein localises to the nucleus. It localises to the nucleolus. It is found in the nucleoplasm. Its subcellular location is the chromosome. In terms of biological role, inhibits the poly(ADP-ribosyl)ation activity of PARP1 and the degradation of PARP1 by CASP3 following genotoxic stress. Binds to double-stranded RNA or DNA without sequence specificity. Involved in development of the eye and of primordial germ cells. This Homo sapiens (Human) protein is Pumilio homolog 3.